The chain runs to 347 residues: Ornithine carbamoyltransferase (347 aa).

Carbamoyl phosphate-binding positions include 56–59, Gln83, Arg107, and 134–137; these read STRT and HPTQ. L-ornithine-binding positions include Asn168, Asp232, and 236–237; that span reads SM. Carbamoyl phosphate-binding positions include 274 to 275 and Arg320; that span reads CL.

The protein belongs to the aspartate/ornithine carbamoyltransferase superfamily. OTCase family.

The protein localises to the cytoplasm. The catalysed reaction is carbamoyl phosphate + L-ornithine = L-citrulline + phosphate + H(+). Reversibly catalyzes the transfer of the carbamoyl group from carbamoyl phosphate (CP) to the N(epsilon) atom of ornithine (ORN) to produce L-citrulline. The polypeptide is Ornithine carbamoyltransferase (Blochmanniella floridana).